The sequence spans 251 residues: 5'-nucleotidase SurE (251 aa).

Residues aspartate 8, aspartate 9, serine 39, and asparagine 91 each coordinate a divalent metal cation.

This sequence belongs to the SurE nucleotidase family. A divalent metal cation serves as cofactor.

Its subcellular location is the cytoplasm. The catalysed reaction is a ribonucleoside 5'-phosphate + H2O = a ribonucleoside + phosphate. Nucleotidase that shows phosphatase activity on nucleoside 5'-monophosphates. The chain is 5'-nucleotidase SurE from Thioalkalivibrio sulfidiphilus (strain HL-EbGR7).